A 318-amino-acid chain; its full sequence is NAC domain-containing protein 68 (318 aa).

Positions 21 to 175 (LPPGFRFHPT…EWVLCRLYNK (155 aa)) constitute an NAC domain.

As to expression, expressed in stems, leaf blades and callus. Weakly expressed in developing flowers.

It localises to the nucleus. Functionally, probable transcription factor involved in stress response. In Oryza sativa subsp. japonica (Rice), this protein is NAC domain-containing protein 68.